The following is a 512-amino-acid chain: Maturase K (512 aa).

The protein belongs to the intron maturase 2 family. MatK subfamily.

It is found in the plastid. It localises to the chloroplast. Usually encoded in the trnK tRNA gene intron. Probably assists in splicing its own and other chloroplast group II introns. The polypeptide is Maturase K (Lilium regale (Regal lily)).